Reading from the N-terminus, the 134-residue chain is Major pollen allergen Lol p 11 (134 aa).

3 disulfide bridges follow: cysteine 14–cysteine 85, cysteine 17–cysteine 127, and cysteine 38–cysteine 73. Residue asparagine 24 is glycosylated (N-linked (GlcNAc...) asparagine).

It belongs to the Ole e I family.

It is found in the secreted. The chain is Major pollen allergen Lol p 11 from Lolium perenne (Perennial ryegrass).